A 296-amino-acid chain; its full sequence is Ribosomal RNA small subunit methyltransferase A (296 aa).

S-adenosyl-L-methionine-binding residues include Asn32, Leu34, Gly59, Glu80, Asp105, and Asn130.

Belongs to the class I-like SAM-binding methyltransferase superfamily. rRNA adenine N(6)-methyltransferase family. RsmA subfamily.

It localises to the cytoplasm. The catalysed reaction is adenosine(1518)/adenosine(1519) in 16S rRNA + 4 S-adenosyl-L-methionine = N(6)-dimethyladenosine(1518)/N(6)-dimethyladenosine(1519) in 16S rRNA + 4 S-adenosyl-L-homocysteine + 4 H(+). Its function is as follows. Specifically dimethylates two adjacent adenosines (A1518 and A1519) in the loop of a conserved hairpin near the 3'-end of 16S rRNA in the 30S particle. May play a critical role in biogenesis of 30S subunits. The sequence is that of Ribosomal RNA small subunit methyltransferase A from Ligilactobacillus salivarius (strain UCC118) (Lactobacillus salivarius).